We begin with the raw amino-acid sequence, 239 residues long: Lipoprotein-releasing system ATP-binding protein LolD (239 aa).

Residues 9–239 (LQVQHVSKHY…AATSPTGLAE (231 aa)) enclose the ABC transporter domain. 45–52 (GSSGSGKS) is a binding site for ATP.

The protein belongs to the ABC transporter superfamily. Lipoprotein translocase (TC 3.A.1.125) family. As to quaternary structure, the complex is composed of two ATP-binding proteins (LolD) and two transmembrane proteins (LolC and LolE).

The protein resides in the cell inner membrane. Functionally, part of the ABC transporter complex LolCDE involved in the translocation of mature outer membrane-directed lipoproteins, from the inner membrane to the periplasmic chaperone, LolA. Responsible for the formation of the LolA-lipoprotein complex in an ATP-dependent manner. In Shewanella frigidimarina (strain NCIMB 400), this protein is Lipoprotein-releasing system ATP-binding protein LolD.